Here is a 514-residue protein sequence, read N- to C-terminus: Butyrophilin subfamily 2 member A2 (514 aa).

An N-terminal signal peptide occupies residues 1 to 29; it reads MEPTTSLRSCPIASLLFFLVLSLFVLVSA. An Ig-like V-type domain is found at 30–142; that stretch reads QFTVIGPAEP…SYDQATMKLM (113 aa). Over 30–244 the chain is Extracellular; that stretch reads QFTVIGPAEP…ILIPESFVPS (215 aa). N-linked (GlcNAc...) asparagine glycosylation is found at Asn47 and Asn115. 2 cysteine pairs are disulfide-bonded: Cys52/Cys126 and Cys166/Cys220. Positions 150–232 constitute an Ig-like C2-type domain; it reads PLIKMKTLED…NNTLLSQEVE (83 aa). Residues 245–265 form a helical membrane-spanning segment; that stretch reads LPLWMVAVAVTLPVVMLILLT. Residues 266 to 514 are Cytoplasmic-facing; that stretch reads SGSICLVKKH…PISQSLVRKP (249 aa). Positions 281-304 form a coiled coil; that stretch reads ILSAEKEAEYEEKEAARQLQEELR. Residues 295–488 form the B30.2/SPRY domain; that stretch reads AARQLQEELR…LFICPAFTGA (194 aa).

It belongs to the immunoglobulin superfamily. BTN/MOG family. Post-translationally, N-glycosylated. Widely expressed (at protein level). In the thymus, restricted to the corticomedullary junction, but not confined solely to epithelial cells (at protein level). Significant expression on naive B-cells, splenic natural killer cells, dendritic cells and peritoneal macrophages (at protein level). Negligible expression on naive T-cells up-regulated on activated T-cells (at protein level).

It localises to the membrane. Its function is as follows. Inhibits the proliferation of CD4 and CD8 T-cells activated by anti-CD3 antibodies, T-cell metabolism and IL2 and IFNG secretion. The protein is Butyrophilin subfamily 2 member A2 (Btn2a2) of Mus musculus (Mouse).